A 2178-amino-acid chain; its full sequence is Genome polyprotein (2178 aa).

A disordered region spans residues 1–20; sequence MGAQVSTQKSGSHENQNILT. Gly2 is lipidated: N-myristoyl glycine; by host. The Cytoplasmic portion of the chain corresponds to 2-1490; sequence GAQVSTQKSG…AVNQASMIIN (1489 aa). Positions 564–584 are amphipathic alpha-helix; the sequence is ALTEGLSDELEEVIVEKTKQT. Active-site for protease 2A activity residues include His875 and Asp893. Zn(2+) contacts are provided by Cys910 and Cys912. Cys964 serves as the catalytic For protease 2A activity. The Zn(2+) site is built by Cys970 and His972. The tract at residues 1100 to 1172 is membrane-binding; the sequence is NDGWFRKFND…HDSNPTQEKR (73 aa). The oligomerization stretch occupies residues 1100–1238; sequence NDGWFRKFND…TPGSGKSLTT (139 aa). Residues 1121-1125 form an RNA-binding region; that stretch reads ANKIS. The region spanning 1204–1360 is the SF3 helicase domain; the sequence is KNKITNYMQF…STYTKNGKLN (157 aa). 4 residues coordinate Zn(2+): Cys1368, Cys1371, Cys1380, and Cys1385. Residues 1368 to 1385 form a C4-type zinc finger; that stretch reads CKDCHQPSNFKKCCPLVC. The RNA-binding stretch occupies residues 1412–1419; that stretch reads DYKNKVKI. Residues 1423–1428 form an oligomerization region; the sequence is LEVLFQ. Residues 1491–1506 lie within the membrane without spanning it; sequence TILMFVSTLGIVYVIY. Topologically, residues 1507–2178 are cytoplasmic; sequence KLFAQTQGPY…VLRRRWLDLF (672 aa). Residue Tyr1516 is modified to O-(5'-phospho-RNA)-tyrosine. The Peptidase C3 domain maps to 1537–1714; that stretch reads GPNTEFALSL…FSAQLKKQYF (178 aa). Catalysis depends on for protease 3C activity residues His1576, Glu1607, and Cys1682. Positions 1946-2059 constitute a RdRp catalytic domain; the sequence is HLMAFDYSNF…SYPFELDSNI (114 aa). The Mg(2+) site is built by Asp1951 and Asp2045.

This sequence belongs to the picornaviruses polyprotein family. Interacts with capsid protein VP1 and capsid protein VP3 to form heterotrimeric protomers. As to quaternary structure, interacts with capsid protein VP0, and capsid protein VP3 to form heterotrimeric protomers. Five protomers subsequently associate to form pentamers which serve as building blocks for the capsid. Interacts with capsid protein VP2, capsid protein VP3 and capsid protein VP4 following cleavage of capsid protein VP0. In terms of assembly, interacts with capsid protein VP1 and capsid protein VP3 in the mature capsid. Interacts with capsid protein VP0 and capsid protein VP1 to form heterotrimeric protomers. Five protomers subsequently associate to form pentamers which serve as building blocks for the capsid. Interacts with capsid protein VP4 in the mature capsid. Interacts with protein 2C; this interaction may be important for virion morphogenesis. As to quaternary structure, interacts with capsid protein VP1 and capsid protein VP3. In terms of assembly, homodimer. Homohexamer; forms a hexameric ring structure with 6-fold symmetry characteristic of AAA+ ATPases. Interacts (via N-terminus) with host RTN3 (via reticulon domain); this interaction is important for viral replication. Interacts with capsid protein VP3; this interaction may be important for virion morphogenesis. As to quaternary structure, interacts with protein 3CD. In terms of assembly, homodimer. Interacts with host GBF1. Interacts (via GOLD domain) with host ACBD3 (via GOLD domain); this interaction allows the formation of a viral protein 3A/ACBD3 heterotetramer with a 2:2 stoichiometry, which will stimulate the recruitment of host PI4KB in order to synthesize PI4P at the viral RNA replication sites. Interacts with RNA-directed RNA polymerase. As to quaternary structure, interacts with protein 3AB and with RNA-directed RNA polymerase. In terms of assembly, interacts with Viral protein genome-linked and with protein 3CD. Requires Mg(2+) as cofactor. Specific enzymatic cleavages in vivo by the viral proteases yield processing intermediates and the mature proteins. Post-translationally, myristoylation is required for the formation of pentamers during virus assembly. Further assembly of 12 pentamers and a molecule of genomic RNA generates the provirion. In terms of processing, during virion maturation, immature virions are rendered infectious following cleavage of VP0 into VP4 and VP2. This maturation seems to be an autocatalytic event triggered by the presence of RNA in the capsid and it is followed by a conformational change infectious virion. Myristoylation is required during RNA encapsidation and formation of the mature virus particle. Post-translationally, VPg is uridylylated by the polymerase into VPg-pUpU. This acts as a nucleotide-peptide primer for the genomic RNA replication.

The protein localises to the virion. It is found in the host cytoplasm. It localises to the host cytoplasmic vesicle membrane. Its subcellular location is the host nucleus. The catalysed reaction is a ribonucleoside 5'-triphosphate + H2O = a ribonucleoside 5'-diphosphate + phosphate + H(+). It carries out the reaction Selective cleavage of Tyr-|-Gly bond in the picornavirus polyprotein.. It catalyses the reaction RNA(n) + a ribonucleoside 5'-triphosphate = RNA(n+1) + diphosphate. The enzyme catalyses Selective cleavage of Gln-|-Gly bond in the poliovirus polyprotein. In other picornavirus reactions Glu may be substituted for Gln, and Ser or Thr for Gly.. Replication or transcription is subject to high level of random mutations by the nucleotide analog ribavirin. Forms an icosahedral capsid of pseudo T=3 symmetry with capsid proteins VP2 and VP3. The capsid is 300 Angstroms in diameter, composed of 60 copies of each capsid protein and enclosing the viral positive strand RNA genome. Capsid protein VP1 mainly forms the vertices of the capsid. Capsid protein VP1 interacts with host cell receptor to provide virion attachment to target host cells. This attachment induces virion internalization. Tyrosine kinases are probably involved in the entry process. After binding to its receptor, the capsid undergoes conformational changes. Capsid protein VP1 N-terminus (that contains an amphipathic alpha-helix) and capsid protein VP4 are externalized. Together, they shape a pore in the host membrane through which viral genome is translocated to host cell cytoplasm. Functionally, forms an icosahedral capsid of pseudo T=3 symmetry with capsid proteins VP2 and VP3. The capsid is 300 Angstroms in diameter, composed of 60 copies of each capsid protein and enclosing the viral positive strand RNA genome. In terms of biological role, lies on the inner surface of the capsid shell. After binding to the host receptor, the capsid undergoes conformational changes. Capsid protein VP4 is released, Capsid protein VP1 N-terminus is externalized, and together, they shape a pore in the host membrane through which the viral genome is translocated into the host cell cytoplasm. Its function is as follows. Component of immature procapsids, which is cleaved into capsid proteins VP4 and VP2 after maturation. Allows the capsid to remain inactive before the maturation step. Cysteine protease that cleaves viral polyprotein and specific host proteins. It is responsible for the autocatalytic cleavage between the P1 and P2 regions, which is the first cleavage occurring in the polyprotein. Also cleaves the host translation initiation factor EIF4G1, in order to shut down the capped cellular mRNA translation. Inhibits the host nucleus-cytoplasm protein and RNA trafficking by cleaving host members of the nuclear pores. Counteracts stress granule formation probably by antagonizing its assembly or promoting its dissassembly. Functionally, plays an essential role in the virus replication cycle by acting as a viroporin. Creates a pore in the host endoplasmic reticulum and as a consequence releases Ca2+ in the cytoplasm of infected cell. In turn, high levels of cytoplasmic calcium may trigger membrane trafficking and transport of viral ER-associated proteins to viroplasms, sites of viral genome replication. In terms of biological role, induces and associates with structural rearrangements of intracellular membranes. Displays RNA-binding, nucleotide binding and NTPase activities. May play a role in virion morphogenesis and viral RNA encapsidation by interacting with the capsid protein VP3. Its function is as follows. Localizes the viral replication complex to the surface of membranous vesicles. Together with protein 3CD binds the Cis-Active RNA Element (CRE) which is involved in RNA synthesis initiation. Acts as a cofactor to stimulate the activity of 3D polymerase, maybe through a nucleid acid chaperone activity. Localizes the viral replication complex to the surface of membranous vesicles. It inhibits host cell endoplasmic reticulum-to-Golgi apparatus transport and causes the disassembly of the Golgi complex, possibly through GBF1 interaction. This would result in depletion of MHC, trail receptors and IFN receptors at the host cell surface. Plays an essential role in viral RNA replication by recruiting ACBD3 and PI4KB at the viral replication sites, thereby allowing the formation of the rearranged membranous structures where viral replication takes place. Functionally, acts as a primer for viral RNA replication and remains covalently bound to viral genomic RNA. VPg is uridylylated prior to priming replication into VPg-pUpU. The oriI viral genomic sequence may act as a template for this. The VPg-pUpU is then used as primer on the genomic RNA poly(A) by the RNA-dependent RNA polymerase to replicate the viral genome. During genome replication, the VPg-RNA linkage is removed by the host TDP2, thereby accelerating replication. During the late stage of the replication cycle, host TDP2 is excluded from sites of viral RNA synthesis and encapsidation, allowing for the generation of progeny virions. In terms of biological role, involved in the viral replication complex and viral polypeptide maturation. It exhibits protease activity with a specificity and catalytic efficiency that is different from protease 3C. Protein 3CD lacks polymerase activity. Protein 3CD binds to the 5'UTR of the viral genome. Its function is as follows. Replicates the viral genomic RNA on the surface of intracellular membranes. May form linear arrays of subunits that propagate along a strong head-to-tail interaction called interface-I. Covalently attaches UMP to a tyrosine of VPg, which is used to prime RNA synthesis. The positive stranded RNA genome is first replicated at virus induced membranous vesicles, creating a dsRNA genomic replication form. This dsRNA is then used as template to synthesize positive stranded RNA genomes. ss(+)RNA genomes are either translated, replicated or encapsidated. Major viral protease that mediates proteolytic processing of the polyprotein. Cleaves host EIF5B, contributing to host translation shutoff. Also cleaves host PABPC1, contributing to host translation shutoff. Cleaves host NLRP1, triggers host N-glycine-mediated degradation of the autoinhibitory NLRP1 N-terminal fragment. In Homo sapiens (Human), this protein is Genome polyprotein.